Reading from the N-terminus, the 419-residue chain is MVSARGILYYLSHPQELRPMIQWKVFHGLAHQRDEKNESPDVQACYYYLALTSRSFVAVCQQLDPELLMPICIFYLVLRGLDTIEDDMTLSTEVKEPLLRNFHTTIYDQSWTFHDSGPDEKDRELLVHFDCVAREFAKVKDEYKVIITDITKKMGNGMADFVVNGELTGVRKIEDYELYCHYVAGVVGEGLTRLFVEAKVAEPSLLENPKLIESMGQFLQQTNIIRDVREDHDEVRHFWPKEVWAKYADDFDQLVSPIPQNRQKALQCSSEMVLMALNRADDCLNYISGVREQSVFNFVAIPQSMAIATLELCFQNPAIFDKNIKITKGTACQLMMDSTQDMQHVCQAFRRHARRIQKKNNPKDPHFHDINAACNKIERFIDGRYPNLQDEQAKADTMYLVVLLLGILGVAAAVLMAKR.

The helical transmembrane segment at 397 to 417 (TMYLVVLLLGILGVAAAVLMA) threads the bilayer.

The protein belongs to the phytoene/squalene synthase family. Requires Mg(2+) as cofactor.

It is found in the membrane. The enzyme catalyses 2 (2E,6E)-farnesyl diphosphate + NADPH + H(+) = squalene + 2 diphosphate + NADP(+). The catalysed reaction is 2 (2E,6E)-farnesyl diphosphate + NADH + H(+) = squalene + 2 diphosphate + NAD(+). It functions in the pathway terpene metabolism; lanosterol biosynthesis; lanosterol from farnesyl diphosphate: step 1/3. In terms of biological role, squalene synthase; part of the gene cluster that mediates the biosynthesis of squalestatin S1 (SQS1, also known as zaragozic acid A), a heavily oxidized fungal polyketide that offers potent cholesterol lowering activity by targeting squalene synthase (SS). Catalyzes the condensation of 2 two farnesyl pyrophosphate moieties to form squalene. The presence of a gene encoding a squalene synthase supports the identification of the cluster as being responsible for SQS1 production and suggests a likely mechanism for self-resistance. This chain is Squalene synthase R6, found in Phoma sp. (strain ATCC 20986 / MF5453).